Consider the following 386-residue polypeptide: Succinate--CoA ligase [ADP-forming] subunit beta (386 aa).

The 236-residue stretch at 9-244 (KEILRKYGVP…HDEEDPLETR (236 aa)) folds into the ATP-grasp domain. ATP is bound by residues K46, 53–55 (GRG), E99, C102, and E107. Mg(2+)-binding residues include N199 and D213. Residues N264 and 321–323 (GIM) contribute to the substrate site.

This sequence belongs to the succinate/malate CoA ligase beta subunit family. Heterotetramer of two alpha and two beta subunits. Mg(2+) serves as cofactor.

It catalyses the reaction succinate + ATP + CoA = succinyl-CoA + ADP + phosphate. It carries out the reaction GTP + succinate + CoA = succinyl-CoA + GDP + phosphate. It functions in the pathway carbohydrate metabolism; tricarboxylic acid cycle; succinate from succinyl-CoA (ligase route): step 1/1. Functionally, succinyl-CoA synthetase functions in the citric acid cycle (TCA), coupling the hydrolysis of succinyl-CoA to the synthesis of either ATP or GTP and thus represents the only step of substrate-level phosphorylation in the TCA. The beta subunit provides nucleotide specificity of the enzyme and binds the substrate succinate, while the binding sites for coenzyme A and phosphate are found in the alpha subunit. The protein is Succinate--CoA ligase [ADP-forming] subunit beta of Rickettsia typhi (strain ATCC VR-144 / Wilmington).